We begin with the raw amino-acid sequence, 399 residues long: Elongation factor Tu 2 (399 aa).

In terms of domain architecture, tr-type G spans 10 to 209 (KPHVNIGTIG…QVDGYIPEPE (200 aa)). The G1 stretch occupies residues 19–26 (GHVDHGKT). 19-26 (GHVDHGKT) is a GTP binding site. Residue Thr-26 coordinates Mg(2+). The interval 60 to 64 (GITIA) is G2. A G3 region spans residues 81–84 (DCPG). GTP contacts are provided by residues 81–85 (DCPGH) and 136–139 (NKAD). Positions 136-139 (NKAD) are G4. Residues 174–176 (SAL) are G5.

Belongs to the TRAFAC class translation factor GTPase superfamily. Classic translation factor GTPase family. EF-Tu/EF-1A subfamily. As to quaternary structure, monomer.

The protein resides in the cytoplasm. It catalyses the reaction GTP + H2O = GDP + phosphate + H(+). In terms of biological role, GTP hydrolase that promotes the GTP-dependent binding of aminoacyl-tRNA to the A-site of ribosomes during protein biosynthesis. In Syntrophotalea carbinolica (strain DSM 2380 / NBRC 103641 / GraBd1) (Pelobacter carbinolicus), this protein is Elongation factor Tu 2.